The chain runs to 177 residues: Translation initiation factor IF-3 (177 aa).

It belongs to the IF-3 family. Monomer.

It is found in the cytoplasm. In terms of biological role, IF-3 binds to the 30S ribosomal subunit and shifts the equilibrium between 70S ribosomes and their 50S and 30S subunits in favor of the free subunits, thus enhancing the availability of 30S subunits on which protein synthesis initiation begins. The protein is Translation initiation factor IF-3 of Clostridium perfringens (strain 13 / Type A).